Consider the following 144-residue polypeptide: Flagellar assembly factor FliW (144 aa).

The protein belongs to the FliW family. Interacts with translational regulator CsrA and flagellin(s).

It is found in the cytoplasm. Its function is as follows. Acts as an anti-CsrA protein, binds CsrA and prevents it from repressing translation of its target genes, one of which is flagellin. Binds to flagellin and participates in the assembly of the flagellum. This is Flagellar assembly factor FliW from Geobacillus sp. (strain WCH70).